A 245-amino-acid polypeptide reads, in one-letter code: 7-cyano-7-deazaguanine synthase (245 aa).

19-29 provides a ligand contact to ATP; it reads FSGGQDSATCL. 4 residues coordinate Zn(2+): cysteine 207, cysteine 222, cysteine 225, and cysteine 228.

This sequence belongs to the QueC family. Zn(2+) is required as a cofactor.

It carries out the reaction 7-carboxy-7-deazaguanine + NH4(+) + ATP = 7-cyano-7-deazaguanine + ADP + phosphate + H2O + H(+). It functions in the pathway purine metabolism; 7-cyano-7-deazaguanine biosynthesis. In terms of biological role, catalyzes the ATP-dependent conversion of 7-carboxy-7-deazaguanine (CDG) to 7-cyano-7-deazaguanine (preQ(0)). This is 7-cyano-7-deazaguanine synthase from Gluconacetobacter diazotrophicus (strain ATCC 49037 / DSM 5601 / CCUG 37298 / CIP 103539 / LMG 7603 / PAl5).